The primary structure comprises 351 residues: Phenylacetaldoxime dehydratase (351 aa).

This sequence belongs to the heme-containing dehydratase family. As to quaternary structure, monomer. It depends on heme b as a cofactor.

It carries out the reaction (Z)-phenylacetaldehyde oxime = phenylacetonitrile + H2O. Its function is as follows. Catalyzes the stoichiometric dehydration of Z-phenylacetaldoxime to phenylacetonitrile. Prefers the Z-form of phenylacetaldoxime over its E-isomer. The sequence is that of Phenylacetaldoxime dehydratase from Bacillus sp. (strain OxB-1).